A 94-amino-acid polypeptide reads, in one-letter code: Co-chaperonin GroES (94 aa).

Belongs to the GroES chaperonin family. As to quaternary structure, heptamer of 7 subunits arranged in a ring. Interacts with the chaperonin GroEL.

The protein localises to the cytoplasm. Its function is as follows. Together with the chaperonin GroEL, plays an essential role in assisting protein folding. The GroEL-GroES system forms a nano-cage that allows encapsulation of the non-native substrate proteins and provides a physical environment optimized to promote and accelerate protein folding. GroES binds to the apical surface of the GroEL ring, thereby capping the opening of the GroEL channel. This chain is Co-chaperonin GroES, found in Shouchella clausii (strain KSM-K16) (Alkalihalobacillus clausii).